Consider the following 272-residue polypeptide: Probable feruloyl esterase C (272 aa).

A signal peptide spans 1–22 (MVPTIIYSAILALSAFTPSVFA).

This sequence belongs to the faeC family.

The protein resides in the secreted. It carries out the reaction feruloyl-polysaccharide + H2O = ferulate + polysaccharide.. In terms of biological role, involved in degradation of plant cell walls. Hydrolyzes the feruloyl-arabinose ester bond in arabinoxylans, and the feruloyl-galactose ester bond in pectin. Active against paranitrophenyl-acetate, methyl ferulate and wheat arabinoxylan. The protein is Probable feruloyl esterase C (faeC) of Aspergillus fumigatus (strain ATCC MYA-4609 / CBS 101355 / FGSC A1100 / Af293) (Neosartorya fumigata).